Reading from the N-terminus, the 273-residue chain is Dermonecrotic toxin LhSicTox-alphaIA2bii (273 aa).

The active site involves His5. Mg(2+)-binding residues include Glu25 and Asp27. The Nucleophile role is filled by His41. 2 cysteine pairs are disulfide-bonded: Cys45–Cys51 and Cys47–Cys190. Residue Asp85 participates in Mg(2+) binding.

Belongs to the arthropod phospholipase D family. Class II subfamily. It depends on Mg(2+) as a cofactor. As to expression, expressed by the venom gland.

It is found in the secreted. The catalysed reaction is an N-(acyl)-sphingosylphosphocholine = an N-(acyl)-sphingosyl-1,3-cyclic phosphate + choline. It catalyses the reaction an N-(acyl)-sphingosylphosphoethanolamine = an N-(acyl)-sphingosyl-1,3-cyclic phosphate + ethanolamine. It carries out the reaction a 1-acyl-sn-glycero-3-phosphocholine = a 1-acyl-sn-glycero-2,3-cyclic phosphate + choline. The enzyme catalyses a 1-acyl-sn-glycero-3-phosphoethanolamine = a 1-acyl-sn-glycero-2,3-cyclic phosphate + ethanolamine. Its function is as follows. Dermonecrotic toxins cleave the phosphodiester linkage between the phosphate and headgroup of certain phospholipids (sphingolipid and lysolipid substrates), forming an alcohol (often choline) and a cyclic phosphate. This toxin acts on sphingomyelin (SM). It may also act on ceramide phosphoethanolamine (CPE), lysophosphatidylcholine (LPC) and lysophosphatidylethanolamine (LPE), but not on lysophosphatidylserine (LPS), and lysophosphatidylglycerol (LPG). It acts by transphosphatidylation, releasing exclusively cyclic phosphate products as second products. Induces dermonecrosis, hemolysis, increased vascular permeability, edema, inflammatory response, and platelet aggregation. The chain is Dermonecrotic toxin LhSicTox-alphaIA2bii from Loxosceles hirsuta (Recluse spider).